A 105-amino-acid chain; its full sequence is Urease subunit beta (105 aa).

It belongs to the urease beta subunit family. Heterotrimer of UreA (gamma), UreB (beta) and UreC (alpha) subunits. Three heterotrimers associate to form the active enzyme.

The protein localises to the cytoplasm. It carries out the reaction urea + 2 H2O + H(+) = hydrogencarbonate + 2 NH4(+). The protein operates within nitrogen metabolism; urea degradation; CO(2) and NH(3) from urea (urease route): step 1/1. This chain is Urease subunit beta, found in Pseudomonas putida (strain ATCC 47054 / DSM 6125 / CFBP 8728 / NCIMB 11950 / KT2440).